A 236-amino-acid polypeptide reads, in one-letter code: Translocon-associated protein subunit alpha (236 aa).

Residues 1-20 form the signal peptide; that stretch reads MNKLITLLLAVLMIISCVYS. Topologically, residues 21 to 163 are lumenal; it reads DDVEITDDEV…TEKETSFDMD (143 aa). N-linked (GlcNAc...) asparagine glycosylation is found at Asn74, Asn94, Asn141, Asn148, and Asn152. A helical transmembrane segment spans residues 164–184; it reads SFFLILLGLGFVGGIGYIVYG. Topologically, residues 185–236 are cytoplasmic; sequence KMPKQKKVRTVSKVNKNAVRVETEDETAEWLSGTSAASSKVKSVQKVVKKNK.

Belongs to the TRAP-alpha family. Heterotrimer of TRAP-alpha, TRAP-beta and TRAP-gamma. Post-translationally, phosphorylated in its cytoplasmic tail.

It localises to the endoplasmic reticulum membrane. Functionally, TRAP proteins are part of a complex whose function is to bind calcium to the ER membrane and thereby regulate the retention of ER resident proteins. This chain is Translocon-associated protein subunit alpha (ssr1), found in Dictyostelium discoideum (Social amoeba).